Here is a 398-residue protein sequence, read N- to C-terminus: Na(+)/H(+) antiporter NhaA (398 aa).

The next 11 membrane-spanning stretches (helical) occupy residues 19 to 39 (IGGI…NSPG), 64 to 84 (LLLW…GLEL), 99 to 119 (IILP…IYLA), 130 to 150 (GWAI…SLLG), 159 to 179 (ILLT…IACF), 182 to 202 (NDIY…LFIV), 222 to 242 (IAML…AMFI), 266 to 286 (ATFI…LTNI), 299 to 319 (IALG…WVGV), 337 to 357 (GMSA…SLAF), and 370 to 390 (LGII…LNKT).

This sequence belongs to the NhaA Na(+)/H(+) (TC 2.A.33) antiporter family.

The protein localises to the cell inner membrane. It carries out the reaction Na(+)(in) + 2 H(+)(out) = Na(+)(out) + 2 H(+)(in). Na(+)/H(+) antiporter that extrudes sodium in exchange for external protons. In Desulfotalea psychrophila (strain LSv54 / DSM 12343), this protein is Na(+)/H(+) antiporter NhaA.